The sequence spans 198 residues: Probable GTP-binding protein EngB (198 aa).

Positions 21-195 constitute an EngB-type G domain; the sequence is NFSEVAFLGR…EDIIINQTLG (175 aa). GTP-binding positions include 29–36, 56–60, 81–84, 151–154, and 174–176; these read GRSNVGKS, GKTQL, DLPG, TKCD, and VSN. Mg(2+)-binding residues include S36 and T58.

The protein belongs to the TRAFAC class TrmE-Era-EngA-EngB-Septin-like GTPase superfamily. EngB GTPase family. Mg(2+) serves as cofactor.

Functionally, necessary for normal cell division and for the maintenance of normal septation. The polypeptide is Probable GTP-binding protein EngB (Campylobacter jejuni subsp. jejuni serotype O:2 (strain ATCC 700819 / NCTC 11168)).